The chain runs to 101 residues: Integration host factor subunit beta (101 aa).

Belongs to the bacterial histone-like protein family. Heterodimer of an alpha and a beta chain.

Its function is as follows. This protein is one of the two subunits of integration host factor, a specific DNA-binding protein that functions in genetic recombination as well as in transcriptional and translational control. This chain is Integration host factor subunit beta, found in Nitrobacter hamburgensis (strain DSM 10229 / NCIMB 13809 / X14).